Reading from the N-terminus, the 359-residue chain is Phospho-N-acetylmuramoyl-pentapeptide-transferase (359 aa).

Residues 1–25 (MLYQLALLLKDYWFAFNVLKYITFR) lie on the Periplasmic side of the membrane. Residues 26–48 (SFTAVLIAFFLTLVLSPSFINRL) traverse the membrane as a helical segment. At 49-74 (RKIQRLFGGYVREYTPESHEVKKYTP) the chain is on the cytoplasmic side. 2 residues coordinate muraymycin D2: Lys70 and Thr75. The chain crosses the membrane as a helical span at residues 75-92 (TMGGIVILIVVTLSTLLL). Residues 93 to 98 (MRWDIK) are Periplasmic-facing. A helical transmembrane segment spans residues 99–120 (YTWVVLLSFLSFGTIGFWDDYV). The Cytoplasmic segment spans residues 121 to 130 (KLKNKKGISI). The helical transmembrane segment at 131-152 (KTKFLLQVLSASLISVLIYYWA) threads the bilayer. Topologically, residues 153–172 (DIDTILYFPFFKELYVDLGV) are periplasmic. Residues 173-194 (LYLPFAVFVIVGSANAVNLTDG) traverse the membrane as a helical segment. Asn190, Asp193, and Asp196 together coordinate muraymycin D2. Residues 195 to 197 (LDG) lie on the Cytoplasmic side of the membrane. Residues 198–218 (LAIGPAMTTATALGVVAYAVG) traverse the membrane as a helical segment. Topologically, residues 219–233 (HSKIAQYLNIPYVPY) are periplasmic. The chain crosses the membrane as a helical span at residues 234 to 255 (AGELTVFCFALVGAGLGFLWFN). Over 256–264 (SFPAQMFMG) the chain is Cytoplasmic. The muraymycin D2 site is built by Gly264 and Ser268. A helical membrane pass occupies residues 265-280 (DVGSLSIGASLATVAL). The Periplasmic segment spans residues 281–284 (LTKS). The chain crosses the membrane as a helical span at residues 285–310 (EFIFAVAAGVFVFETISVILQIIYFR). Residues Gln305 and Ala321 each coordinate muraymycin D2. Residues 311–332 (WTGGKRLFKRAPFHHHLELNGL) lie on the Cytoplasmic side of the membrane. The chain crosses the membrane as a helical span at residues 333–355 (PEPKIVVRMWIISILLAIIAISM). Residues 356–359 (LKLR) are Periplasmic-facing.

The protein belongs to the glycosyltransferase 4 family. MraY subfamily. Homodimer. Mg(2+) is required as a cofactor. Requires Mn(2+) as cofactor.

The protein resides in the cell inner membrane. The catalysed reaction is UDP-N-acetyl-alpha-D-muramoyl-L-alanyl-gamma-D-glutamyl-meso-2,6-diaminopimeloyl-D-alanyl-D-alanine + di-trans,octa-cis-undecaprenyl phosphate = di-trans,octa-cis-undecaprenyl diphospho-N-acetyl-alpha-D-muramoyl-L-alanyl-D-glutamyl-meso-2,6-diaminopimeloyl-D-alanyl-D-alanine + UMP. The protein operates within cell wall biogenesis; peptidoglycan biosynthesis. Inhibited by natural nucleoside antibiotics including tunicamycin, capuramycin and muraymycin. Usually the cofactor magnesium is not required for antibiotic binding. Catalyzes the initial step of the lipid cycle reactions in the biosynthesis of the cell wall peptidoglycan: transfers peptidoglycan precursor phospho-MurNAc-pentapeptide from UDP-MurNAc-pentapeptide onto the lipid carrier undecaprenyl phosphate, yielding undecaprenyl-pyrophosphoryl-MurNAc-pentapeptide, known as lipid I. This Aquifex aeolicus (strain VF5) protein is Phospho-N-acetylmuramoyl-pentapeptide-transferase.